The sequence spans 314 residues: MTLSTNNSKNDFLDKTGPVSILGTSKGKKALLRRRLLIIQNVRNILIKKIINFDNFSNPIETYKIMLRKSLHFGHPVIQCDSGMKKYIRGQSNGKHFINLFRTKRYIRKALWYLTKYAYKRKNILFVGTAIPSARYVATTALKTKSFFVNFRWLGGMLNNWKTLRKLLQKLKTLQKEQKNKIWKNLPKKEGIARLKEKQRLEKYLKGIQMIKGFPEVVIMTSQTKDLSAARECKKMGIWNLSILDTNCDPRLADLMVPANDDSASSVKFLLFNFAKAIQAGRALSVLKKKLKNKLTKKKQTKSRAKVFLKEKKL.

It belongs to the universal ribosomal protein uS2 family.

Its subcellular location is the plastid. The protein localises to the chloroplast. The polypeptide is Small ribosomal subunit protein uS2c (rps2) (Stigeoclonium helveticum (Green alga)).